We begin with the raw amino-acid sequence, 302 residues long: Probable alpha-L-glutamate ligase (302 aa).

Positions 104–287 constitute an ATP-grasp domain; the sequence is LQLLSRKGVG…VAGLLIKFIE (184 aa). ATP contacts are provided by residues lysine 141, 178–179, aspartate 187, and 211–213; these read EY and RSN. Positions 248, 260, and 262 each coordinate Mg(2+). Residues aspartate 248, glutamate 260, and asparagine 262 each contribute to the Mn(2+) site.

It belongs to the RimK family. Requires Mg(2+) as cofactor. The cofactor is Mn(2+).

This chain is Probable alpha-L-glutamate ligase, found in Alcanivorax borkumensis (strain ATCC 700651 / DSM 11573 / NCIMB 13689 / SK2).